We begin with the raw amino-acid sequence, 620 residues long: Translation initiation factor IF-2 (620 aa).

The region spanning 119-288 (ERPPIVTIMG…IILISELENL (170 aa)) is the tr-type G domain. The segment at 128–135 (GHVDHGKT) is G1. Residue 128–135 (GHVDHGKT) coordinates GTP. The tract at residues 153-157 (GITQA) is G2. The tract at residues 175-178 (DTPG) is G3. Residues 175-179 (DTPGH) and 229-232 (NKID) contribute to the GTP site. The G4 stretch occupies residues 229–232 (NKID). Positions 265-267 (SAI) are G5.

Belongs to the TRAFAC class translation factor GTPase superfamily. Classic translation factor GTPase family. IF-2 subfamily.

The protein localises to the cytoplasm. In terms of biological role, one of the essential components for the initiation of protein synthesis. Protects formylmethionyl-tRNA from spontaneous hydrolysis and promotes its binding to the 30S ribosomal subunits. Also involved in the hydrolysis of GTP during the formation of the 70S ribosomal complex. This is Translation initiation factor IF-2 from Mycoplasma capricolum subsp. capricolum (strain California kid / ATCC 27343 / NCTC 10154).